The following is a 91-amino-acid chain: Large ribosomal subunit protein bL27 (91 aa).

The interval 1-21 (MAHKKSGGSSRNGRDSAGRRL) is disordered.

Belongs to the bacterial ribosomal protein bL27 family.

The polypeptide is Large ribosomal subunit protein bL27 (Phenylobacterium zucineum (strain HLK1)).